The sequence spans 714 residues: Sodium-dependent acetylcholine transporter (714 aa).

The interval 1–21 is disordered; sequence MSVSSNDPEQRNGRGMASGNN. Over 1–74 the chain is Cytoplasmic; the sequence is MSVSSNDPEQ…GNWSNKSDYL (74 aa). The next 3 helical transmembrane spans lie at 75–95, 100–120, and 152–172; these read LAVI…FLVF, AAFL…MFFM, and ISGF…FYLI. Over 173 to 257 the chain is Extracellular; it reads NSFSFSIPWS…LSKGVDDFGT (85 aa). N-linked (GlcNAc...) asparagine glycans are attached at residues N192, N205, N211, and N222. Transmembrane regions (helical) follow at residues 258 to 278, 287 to 307, 336 to 356, 368 to 388, 422 to 442, 476 to 496, 502 to 522, 548 to 568, and 584 to 604; these read LNWY…LCLF, VVYV…TRLL, AAVQ…TIAS, IWLV…LTFS, AGVS…LLVV, VCAL…LFWM, FVLT…INWV, ILFK…LWLD, and ILTA…VGIW. Over 605–714 the chain is Cytoplasmic; the sequence is QFCIAKGTIT…IPKFERETAI (110 aa).

Belongs to the sodium:neurotransmitter symporter (SNF) (TC 2.A.22) family. In terms of assembly, interacts with stn-1; part of the DGC. In terms of tissue distribution, body wall, and vulval and enteric muscles.

The protein localises to the cell membrane. The protein resides in the postsynaptic cell membrane. Functionally, mediates sodium-dependent uptake of acetylcholine at neuromuscular junctions during periods of increased synaptic activity, may also prevent spillover to adjacent synaptic sites. Not involved in the uptake of other neurotransmitters (GABA, glycine, proline and glutamate) and there was also no inhibition of uptake by adding an excess of other candidate substrates (GABA, glycine, taurine, creatine, proline, alanine, carnitine, glutamate and betaine). Required for muscle integrity; altered transport of acetylcholine due to loss of dystrophin-glycoprotein complex (DGC) function results in muscle degeneration. The chain is Sodium-dependent acetylcholine transporter from Caenorhabditis elegans.